The following is a 662-amino-acid chain: Cytochrome bo(3) ubiquinol oxidase subunit 1 (662 aa).

Over 1–14 (MFGKLTFDAIPYHE) the chain is Extracellular. A helical membrane pass occupies residues 15 to 35 (PIIMITYIAIILIALCIASTI). Residues 36–58 (TYYKKWKYLWYEWFTTVDHKKIS) lie on the Cytoplasmic side of the membrane. Residues 59 to 79 (IMYGILAFVMLFRGFVDAILM) traverse the membrane as a helical segment. A ubiquinone contacts are provided by Arg71, Asp75, and His98. The Extracellular segment spans residues 80 to 106 (RTQQVVASAGFKGFLPPHHYDQIFTAH). His106 is a heme b binding site. The helical transmembrane segment at 107–127 (GVIMIFFVAMPLVIGLMNLVI) threads the bilayer. Residues 128–145 (PLQIGARDVAFPFLNNLS) lie on the Cytoplasmic side of the membrane. The helical transmembrane segment at 146-166 (FWLNVSSAVLLTLSLGIGEFA) threads the bilayer. Residues 167–189 (QTGWLAYPPLSGIKYSSGVGVDY) lie on the Extracellular side of the membrane. Trp170 is a binding site for heme b. A helical membrane pass occupies residues 190-210 (WIWSLQISGVGTTLTGINFLV). Residues 211–232 (TILKMRAPGMSFFKMPVFTWTS) lie on the Cytoplasmic side of the membrane. Residues 233 to 253 (LCTNILIVISFPVLTVTLVLL) traverse the membrane as a helical segment. The Extracellular portion of the chain corresponds to 254–277 (TLDRYFNFHFFTNDLGGNAMMYVN). The helical transmembrane segment at 278-298 (LIWIWGHPEVYILVLPVFGVF) threads the bilayer. His284 contacts Cu(2+). The segment at residues 284–288 (HPEVY) is a cross-link (1'-histidyl-3'-tyrosine (His-Tyr)). Position 288 (Tyr288) interacts with Fe(II)-heme o. Residues 299 to 309 (SEVVATFSKKR) are Cytoplasmic-facing. A helical membrane pass occupies residues 310–330 (LFGYVSLVWATLSITILSFIV). Topologically, residues 331–346 (WLHHFFTMGAGADVNT) are extracellular. Cu(2+)-binding residues include His333 and His334. A helical membrane pass occupies residues 347 to 367 (FFGITTMIIAIPTGVKIFNWL). At 368-380 (FTIYQGRVHMHSS) the chain is on the cytoplasmic side. A helical transmembrane segment spans residues 381-401 (ILWTLGFLVTFSIGGMTGVLL). The Extracellular segment spans residues 402–413 (SVPPADFVLHNS). Residues His411 and His419 each coordinate Fe(II)-heme o. A helical transmembrane segment spans residues 414–434 (LFLVAHFHNVIIGGVVFGCFA). Heme b is bound at residue His421. At 435-456 (GINYWFPKLFGFVLNEIWGKRA) the chain is on the cytoplasmic side. A helical transmembrane segment spans residues 457-477 (FWFWIIGFFLAFIPLYFLGLM). Residues 478–493 (GMTRRLSQNIDSEFHM) lie on the Extracellular side of the membrane. Residues Arg481 and Arg482 each coordinate heme b. Residues 494 to 514 (LLCIAAIGACFIGIGIICQVI) traverse the membrane as a helical segment. The Cytoplasmic portion of the chain corresponds to 515–586 (QFFISIKERR…INSINYHDIH (72 aa)). A helical membrane pass occupies residues 587–607 (MPKNTGLGFMISIFSLFFGFS). Residue Ala608 is a topological domain, extracellular. Residues 609-629 (VWHITWLCILSFLAIIISLFI) form a helical membrane-spanning segment. The Cytoplasmic portion of the chain corresponds to 630-662 (NSLNEDTEYTISAEEIKKIEHQYWKNIQKAGLK).

It belongs to the heme-copper respiratory oxidase family. In terms of assembly, the cytochrome bo(3) ubiquinol oxidase complex is a heterooctamer of two A chains, two B chains, two C chains and two D chains. Cu(2+) is required as a cofactor. Heme b serves as cofactor. The cofactor is Fe(II)-heme o.

Its subcellular location is the cell membrane. It catalyses the reaction 2 a ubiquinol + O2 + n H(+)(in) = 2 a ubiquinone + 2 H2O + n H(+)(out). Cytochrome bo(3) ubiquinol oxidase is the terminal enzyme in the aerobic respiratory chain. Catalyzes the four-electron reduction of O2 to water, using a ubiquinol as a membrane soluble electron donor for molecular oxygen reduction. Has proton pump activity across the membrane in addition to electron transfer, pumping 2 protons/electron and generating a proton motive force. All the redox centers of this enzyme complex are located within the largest subunit, subunit I. Protons are probably pumped via D- and K- channels found in this subunit. The chain is Cytochrome bo(3) ubiquinol oxidase subunit 1 (cyoB) from Buchnera aphidicola subsp. Acyrthosiphon pisum (strain APS) (Acyrthosiphon pisum symbiotic bacterium).